A 130-amino-acid polypeptide reads, in one-letter code: Large ribosomal subunit protein eL22 (130 aa).

Residues 1 to 21 (MPGKTAQKGGRPSGKGKKKKQ) form a disordered region. The short motif at 17–20 (KKKK) is the Nuclear localization signal element.

It belongs to the eukaryotic ribosomal protein eL22 family.

The polypeptide is Large ribosomal subunit protein eL22 (RPL22) (Tripneustes gratilla (Hawaian sea urchin)).